Here is a 465-residue protein sequence, read N- to C-terminus: Asparagine--tRNA ligase (465 aa).

The protein belongs to the class-II aminoacyl-tRNA synthetase family. Homodimer.

It localises to the cytoplasm. The enzyme catalyses tRNA(Asn) + L-asparagine + ATP = L-asparaginyl-tRNA(Asn) + AMP + diphosphate + H(+). The protein is Asparagine--tRNA ligase of Clostridium perfringens (strain ATCC 13124 / DSM 756 / JCM 1290 / NCIMB 6125 / NCTC 8237 / Type A).